The primary structure comprises 1382 residues: DNA-directed RNA polymerase subunit beta'' (1382 aa).

C224, C294, C301, and C304 together coordinate Zn(2+).

Belongs to the RNA polymerase beta' chain family. RpoC2 subfamily. In terms of assembly, in plastids the minimal PEP RNA polymerase catalytic core is composed of four subunits: alpha, beta, beta', and beta''. When a (nuclear-encoded) sigma factor is associated with the core the holoenzyme is formed, which can initiate transcription. It depends on Zn(2+) as a cofactor.

It is found in the plastid. Its subcellular location is the chloroplast. It catalyses the reaction RNA(n) + a ribonucleoside 5'-triphosphate = RNA(n+1) + diphosphate. In terms of biological role, DNA-dependent RNA polymerase catalyzes the transcription of DNA into RNA using the four ribonucleoside triphosphates as substrates. This chain is DNA-directed RNA polymerase subunit beta'', found in Liriodendron tulipifera (Tuliptree).